Here is a 398-residue protein sequence, read N- to C-terminus: Acetate kinase (398 aa).

Asparagine 10 contacts Mg(2+). Residue lysine 17 coordinates ATP. Arginine 91 serves as a coordination point for substrate. The active-site Proton donor/acceptor is aspartate 148. Residues 208 to 212, 283 to 285, and 331 to 335 each bind ATP; these read HLGNG, DCR, and GIGEN. Glutamate 385 lines the Mg(2+) pocket.

It belongs to the acetokinase family. In terms of assembly, homodimer. The cofactor is Mg(2+). Requires Mn(2+) as cofactor.

The protein localises to the cytoplasm. It catalyses the reaction acetate + ATP = acetyl phosphate + ADP. The protein operates within metabolic intermediate biosynthesis; acetyl-CoA biosynthesis; acetyl-CoA from acetate: step 1/2. In terms of biological role, catalyzes the formation of acetyl phosphate from acetate and ATP. Can also catalyze the reverse reaction. This chain is Acetate kinase, found in Shewanella pealeana (strain ATCC 700345 / ANG-SQ1).